We begin with the raw amino-acid sequence, 656 residues long: Sulfate transporter 1.3 (656 aa).

Residues Met1–Val30 are disordered. The Cytoplasmic portion of the chain corresponds to Met1 to Arg94. Residues Gly95–Ala115 form a helical membrane-spanning segment. At Lys116–Ser119 the chain is on the extracellular side. A helical transmembrane segment spans residues Leu120 to Gly140. Residues Ser141–Asp144 lie on the Cytoplasmic side of the membrane. Residues Ile145 to Ile165 form a helical membrane-spanning segment. Residues Asp166 to Arg176 lie on the Extracellular side of the membrane. Helical transmembrane passes span Leu177–Leu197 and Gly198–Ile218. Residues Thr219–Asn256 are Extracellular-facing. The chain crosses the membrane as a helical span at residues Trp257–Gly277. The Cytoplasmic segment spans residues Lys278 to Leu283. Residues Phe284–Ile304 traverse the membrane as a helical segment. Topologically, residues Thr305–Arg342 are extracellular. A helical membrane pass occupies residues Ile343 to Ala363. The Cytoplasmic portion of the chain corresponds to Ala364–Glu375. A helical membrane pass occupies residues Met376–Gly396. At Ser397–Ala412 the chain is on the extracellular side. Residues Val413–Phe433 form a helical membrane-spanning segment. The Cytoplasmic segment spans residues Lys434 to Leu441. The chain crosses the membrane as a helical span at residues Ala442 to Phe462. Residues Lys463 to Met473 are Extracellular-facing. The chain crosses the membrane as a helical span at residues Gly474–Ile494. Topologically, residues Ser495–Val656 are cytoplasmic. Positions Gln525–Cys648 constitute an STAS domain.

This sequence belongs to the SLC26A/SulP transporter (TC 2.A.53) family. As to expression, expressed in the phloem of cotyledons, hypocotyls and roots.

The protein resides in the membrane. Functionally, high-affinity H(+)/sulfate cotransporter that mediates the loading of sulfate into the sieve tube. Plays a central role in the regulation of sulfate assimilation. The sequence is that of Sulfate transporter 1.3 (SULTR1;3) from Arabidopsis thaliana (Mouse-ear cress).